The sequence spans 78 residues: Large ribosomal subunit protein bL28 (78 aa).

The protein belongs to the bacterial ribosomal protein bL28 family.

In Psychrobacter sp. (strain PRwf-1), this protein is Large ribosomal subunit protein bL28.